Here is a 156-residue protein sequence, read N- to C-terminus: Arginine repressor (156 aa).

It belongs to the ArgR family.

The protein localises to the cytoplasm. The protein operates within amino-acid biosynthesis; L-arginine biosynthesis [regulation]. In terms of biological role, regulates arginine biosynthesis genes. In Photobacterium profundum (strain SS9), this protein is Arginine repressor.